A 220-amino-acid polypeptide reads, in one-letter code: Deoxyribose-phosphate aldolase (220 aa).

The active-site Proton donor/acceptor is Asp89. Lys151 serves as the catalytic Schiff-base intermediate with acetaldehyde. Lys180 acts as the Proton donor/acceptor in catalysis.

This sequence belongs to the DeoC/FbaB aldolase family. DeoC type 1 subfamily.

Its subcellular location is the cytoplasm. It catalyses the reaction 2-deoxy-D-ribose 5-phosphate = D-glyceraldehyde 3-phosphate + acetaldehyde. It functions in the pathway carbohydrate degradation; 2-deoxy-D-ribose 1-phosphate degradation; D-glyceraldehyde 3-phosphate and acetaldehyde from 2-deoxy-alpha-D-ribose 1-phosphate: step 2/2. Its function is as follows. Catalyzes a reversible aldol reaction between acetaldehyde and D-glyceraldehyde 3-phosphate to generate 2-deoxy-D-ribose 5-phosphate. This is Deoxyribose-phosphate aldolase from Streptococcus pneumoniae (strain Hungary19A-6).